The chain runs to 146 residues: Large ribosomal subunit protein uL15 (146 aa).

A disordered region spans residues 1–56 (MKLHELKAAEGANKASKRVGRGTGSGLGKTSGRGQNGQNSRSGGGVRPGFEGGQMP). Composition is skewed to gly residues over residues 21-35 (RGTGSGLGKTSGRGQ) and 42-52 (SGGGVRPGFEG).

Belongs to the universal ribosomal protein uL15 family. Part of the 50S ribosomal subunit.

In terms of biological role, binds to the 23S rRNA. The sequence is that of Large ribosomal subunit protein uL15 from Clostridium botulinum (strain ATCC 19397 / Type A).